Reading from the N-terminus, the 586-residue chain is MKQSVSAEQIELKSSLPGSKKVYVDGPREGMKVPMREIEQSETNGVPNPPIRVYDTSGPYTDPEYKVELEKGIPTPRHSWILGRGDVEAYEGREVKPEDDGVKVASKHTPVFPQMDRKPLRAKQGANVTQMHYARNGIITSEMEYVAIREGVEPEFVRKEIAEGRAILPANINHPEAEPMIIGRNFHVKVNANIGNSAVSSSIAEEVEKMTWATRWGADTIMDLSTGKNIHTTREWIIRNAPVPVGTVPIYQALEKVNGIAEDLTWEVYRDTLIEQAEQGVDYFTIHAGVLLRYIPITAKRTTGIVSRGGSIMAQWCLFHHKENFLYTHFEEICEIMKQYDVSFSLGDGLRPGSIADANDEAQFSELETLGELTKIAWKHDVQVMIEGPGHVPMHLIKENMEKELDICQGAPFYTLGPLTTDIAPGYDHITSAIGAAMIGWFGTAMLCYVTPKEHLGLPNKDDVRTGVITYKIAAHAADLAKGHKTAHQRDDALSKARFEFRWRDQFNLSLDPERAMEYHDETLPAEGAKTAHFCSMCGPKFCSMRISHDIREYAKENDLETTEAIEKGMKEKAEEFKEAGSHLYQ.

The disordered stretch occupies residues 1-59; the sequence is MKQSVSAEQIELKSSLPGSKKVYVDGPREGMKVPMREIEQSETNGVPNPPIRVYDTSGP. The segment covering 22–39 has biased composition (basic and acidic residues); sequence VYVDGPREGMKVPMREIE. Residues Asn-193, Met-222, Tyr-251, His-287, 307–309, 348–351, and Glu-387 each bind substrate; these read SRG and DGLR. His-391 contacts Zn(2+). Tyr-414 is a binding site for substrate. His-455 is a Zn(2+) binding site. [4Fe-4S] cluster is bound by residues Cys-535, Cys-538, and Cys-543.

The protein belongs to the ThiC family. The cofactor is [4Fe-4S] cluster.

It carries out the reaction 5-amino-1-(5-phospho-beta-D-ribosyl)imidazole + S-adenosyl-L-methionine = 4-amino-2-methyl-5-(phosphooxymethyl)pyrimidine + CO + 5'-deoxyadenosine + formate + L-methionine + 3 H(+). The protein operates within cofactor biosynthesis; thiamine diphosphate biosynthesis. Catalyzes the synthesis of the hydroxymethylpyrimidine phosphate (HMP-P) moiety of thiamine from aminoimidazole ribotide (AIR) in a radical S-adenosyl-L-methionine (SAM)-dependent reaction. This Bacillus cereus (strain ATCC 14579 / DSM 31 / CCUG 7414 / JCM 2152 / NBRC 15305 / NCIMB 9373 / NCTC 2599 / NRRL B-3711) protein is Phosphomethylpyrimidine synthase.